Reading from the N-terminus, the 141-residue chain is Putative pre-16S rRNA nuclease (141 aa).

This sequence belongs to the YqgF nuclease family.

The protein localises to the cytoplasm. In terms of biological role, could be a nuclease involved in processing of the 5'-end of pre-16S rRNA. The chain is Putative pre-16S rRNA nuclease from Dictyoglomus turgidum (strain DSM 6724 / Z-1310).